The following is a 686-amino-acid chain: Osmo-dependent choline transporter BetT2 (686 aa).

At 1 to 22 (MATDNPRAVDDQETHPKDRLNR) the chain is on the cytoplasmic side. A helical membrane pass occupies residues 23–43 (VVFYVSALIILIFSLTTILFN). Residues 44 to 60 (DFANRALNQVLDWVSST) are Periplasmic-facing. Residues 61 to 81 (FSWYYLLAATLYMVFVIFIAC) form a helical membrane-spanning segment. Topologically, residues 82–100 (SRYGNIKLGPKHSKPEFSL) are cytoplasmic. A helical membrane pass occupies residues 101 to 121 (LSWSAMLFSAGIGIDLMFFSV). The Periplasmic segment spans residues 122–150 (AEPLSHYMHPPVGEGQTYEAARQGMVWTL). A helical transmembrane segment spans residues 151-171 (FHYGLTGWCMYALIGMALGYF). The Cytoplasmic portion of the chain corresponds to 172-203 (SYRYNLPLTIRSALYPIFGKKINGPIGHSVDT). Residues 204–224 (AAVIGTIFGIATTCGIGVVQL) form a helical membrane-spanning segment. Topologically, residues 225–237 (NYGLHVLFDLPEN) are periplasmic. Residues 238 to 258 (LWVQTALILVAVIITIISVTS) traverse the membrane as a helical segment. At 259-265 (GVNKGLR) the chain is on the cytoplasmic side. Residues 266–286 (ILSEVNIYVSVGLMLFILFLG) traverse the membrane as a helical segment. The Periplasmic portion of the chain corresponds to 287 to 325 (NTEFLLNALVQNVGDYLSRFPSLALESFAFDQPKEWMNS). A helical transmembrane segment spans residues 326 to 346 (WTLFFWAWWVAWSPFVGLFLA). At 347–356 (RISRGRTIRE) the chain is on the cytoplasmic side. A helical membrane pass occupies residues 357 to 377 (FVSGTLIIPLLFTLTWLSIFG). Topologically, residues 378–412 (NSALHNVIFDGNIALAETVLSNPAHGFYDLLAQYP) are periplasmic. Residues 413–433 (WFPFIAGVATITGLLFYVTSA) traverse the membrane as a helical segment. At 434 to 459 (DSGALVLGNFTTQFTNIDHDAPRWLS) the chain is on the cytoplasmic side. A helical transmembrane segment spans residues 460–480 (VFWAVAIGLLTLAMLMTNGIT). The Periplasmic portion of the chain corresponds to 481 to 484 (ALQN). The chain crosses the membrane as a helical span at residues 485 to 505 (ATIIMGLPFSFVMFLVMAGLY). Over 506-686 (KSLRLEDYRQ…NRPLFPDPKA (181 aa)) the chain is Cytoplasmic.

It belongs to the BCCT transporter (TC 2.A.15) family.

The protein resides in the cell inner membrane. In terms of biological role, uptake of choline in the presence of high salinity. May primarily serve for osmoprotection. The sequence is that of Osmo-dependent choline transporter BetT2 from Acinetobacter baylyi (strain ATCC 33305 / BD413 / ADP1).